The following is a 378-amino-acid chain: Chaperone protein DnaJ (378 aa).

Residues 5–70 (DYYEVLGVGR…NKKAAYDQFG (66 aa)) form the J domain. A CR-type zinc finger spans residues 134–212 (GLTKELRIPT…CHGDGRVEKT (79 aa)). Residues Cys-147, Cys-150, Cys-164, Cys-167, Cys-186, Cys-189, Cys-200, and Cys-203 each coordinate Zn(2+). CXXCXGXG motif repeat units lie at residues 147 to 154 (CDVCDGSG), 164 to 171 (CTTCHGQG), 186 to 193 (CPTCHGRG), and 200 to 207 (CAKCHGDG).

This sequence belongs to the DnaJ family. In terms of assembly, homodimer. It depends on Zn(2+) as a cofactor.

It is found in the cytoplasm. In terms of biological role, participates actively in the response to hyperosmotic and heat shock by preventing the aggregation of stress-denatured proteins and by disaggregating proteins, also in an autonomous, DnaK-independent fashion. Unfolded proteins bind initially to DnaJ; upon interaction with the DnaJ-bound protein, DnaK hydrolyzes its bound ATP, resulting in the formation of a stable complex. GrpE releases ADP from DnaK; ATP binding to DnaK triggers the release of the substrate protein, thus completing the reaction cycle. Several rounds of ATP-dependent interactions between DnaJ, DnaK and GrpE are required for fully efficient folding. Also involved, together with DnaK and GrpE, in the DNA replication of plasmids through activation of initiation proteins. The chain is Chaperone protein DnaJ from Shewanella oneidensis (strain ATCC 700550 / JCM 31522 / CIP 106686 / LMG 19005 / NCIMB 14063 / MR-1).